The chain runs to 1417 residues: DNA-directed RNA polymerase subunit beta' (1417 aa).

Cysteine 68, cysteine 70, cysteine 83, and cysteine 86 together coordinate Zn(2+). Aspartate 458, aspartate 460, and aspartate 462 together coordinate Mg(2+). The Zn(2+) site is built by cysteine 811, cysteine 884, cysteine 891, and cysteine 894.

Belongs to the RNA polymerase beta' chain family. The RNAP catalytic core consists of 2 alpha, 1 beta, 1 beta' and 1 omega subunit. When a sigma factor is associated with the core the holoenzyme is formed, which can initiate transcription. The cofactor is Mg(2+). It depends on Zn(2+) as a cofactor.

It carries out the reaction RNA(n) + a ribonucleoside 5'-triphosphate = RNA(n+1) + diphosphate. DNA-dependent RNA polymerase catalyzes the transcription of DNA into RNA using the four ribonucleoside triphosphates as substrates. This Francisella tularensis subsp. mediasiatica (strain FSC147) protein is DNA-directed RNA polymerase subunit beta'.